The following is a 45-amino-acid chain: YKRCHKKGGHCFPKTVICLPPSSDFGKMDCRWKWKCCKKGSVNNA.

Disulfide bonds link C4–C36, C11–C30, and C18–C37.

Monomer. Expressed by the venom gland.

Its subcellular location is the secreted. In terms of biological role, cationic peptide that possesses multiple functions. It acts as a cell-penetrating peptide (CPP), and as a potent voltage-gated potassium channel (Kv) inhibitor. It exhibits antimicrobial activities, hind limb paralysis, and severe muscle necrosis by a non-enzymatic mechanism. This Crotalus viridis viridis (Prairie rattlesnake) protein is Myotoxin-3.